A 325-amino-acid chain; its full sequence is Eukaryotic translation initiation factor 3 subunit I (325 aa).

WD repeat units follow at residues 1 to 39 (MKPI…VWYS), 43 to 81 (ERLG…LWDC), 87 to 127 (LALL…FFDL), 135 to 175 (NNEP…QYSA), and 180 to 217 (VLVN…LFDS). Thr219 carries the post-translational modification Phosphothreonine. WD repeat units lie at residues 221–267 (EHQK…KFEA) and 275–316 (EEEF…YFDP). Lys264 is subject to N6-acetyllysine. Lys282 participates in a covalent cross-link: Glycyl lysine isopeptide (Lys-Gly) (interchain with G-Cter in ubiquitin). Tyr308 is modified (phosphotyrosine).

In terms of assembly, component of the eukaryotic translation initiation factor 3 (eIF-3) complex, which is composed of 13 subunits: EIF3A, EIF3B, EIF3C, EIF3D, EIF3E, EIF3F, EIF3G, EIF3H, EIF3I, EIF3J, EIF3K, EIF3L and EIF3M. The eIF-3 complex appears to include 3 stable modules: module A is composed of EIF3A, EIF3B, EIF3G and EIF3I; module B is composed of EIF3F, EIF3H, and EIF3M; and module C is composed of EIF3C, EIF3D, EIF3E, EIF3K and EIF3L. EIF3C of module C binds EIF3B of module A and EIF3H of module B, thereby linking the three modules. EIF3J is a labile subunit that binds to the eIF-3 complex via EIF3B. The eIF-3 complex interacts with RPS6KB1 under conditions of nutrient depletion. Mitogenic stimulation leads to binding and activation of a complex composed of MTOR and RPTOR, leading to phosphorylation and release of RPS6KB1 and binding of EIF4B to eIF-3. In terms of processing, phosphorylated by TGF-beta type II receptor.

Its subcellular location is the cytoplasm. Its function is as follows. Component of the eukaryotic translation initiation factor 3 (eIF-3) complex, which is required for several steps in the initiation of protein synthesis. The eIF-3 complex associates with the 40S ribosome and facilitates the recruitment of eIF-1, eIF-1A, eIF-2:GTP:methionyl-tRNAi and eIF-5 to form the 43S pre-initiation complex (43S PIC). The eIF-3 complex stimulates mRNA recruitment to the 43S PIC and scanning of the mRNA for AUG recognition. The eIF-3 complex is also required for disassembly and recycling of post-termination ribosomal complexes and subsequently prevents premature joining of the 40S and 60S ribosomal subunits prior to initiation. The eIF-3 complex specifically targets and initiates translation of a subset of mRNAs involved in cell proliferation, including cell cycling, differentiation and apoptosis, and uses different modes of RNA stem-loop binding to exert either translational activation or repression. This Homo sapiens (Human) protein is Eukaryotic translation initiation factor 3 subunit I.